We begin with the raw amino-acid sequence, 153 residues long: Methylglyoxal synthase (153 aa).

The MGS-like domain maps to 3-153 (DQVNRPKGVT…SYLSRDVPGN (151 aa)). Residues His19, Lys23, 45–48 (TGTT), and 65–66 (SG) each bind substrate. Catalysis depends on Asp71, which acts as the Proton donor/acceptor. Residue His98 coordinates substrate.

This sequence belongs to the methylglyoxal synthase family.

The enzyme catalyses dihydroxyacetone phosphate = methylglyoxal + phosphate. Functionally, catalyzes the formation of methylglyoxal from dihydroxyacetone phosphate. The chain is Methylglyoxal synthase from Hahella chejuensis (strain KCTC 2396).